Reading from the N-terminus, the 311-residue chain is Olfactory receptor 10G9 (311 aa).

The Extracellular portion of the chain corresponds to 1-23 (MSKTSLVTAFILTGLPHAPGLDA). The helical transmembrane segment at 24–44 (PLFGIFLVVYVLTVLGNLLIL) threads the bilayer. Residues 45 to 52 (LVIRVDSH) are Cytoplasmic-facing. The helical transmembrane segment at 53–73 (LHTPMYYFLTNLSFIDMWFST) threads the bilayer. The Extracellular segment spans residues 74-98 (VTVPKMLMTLVSPSGRAISFHSCVA). The cysteines at positions 96 and 188 are disulfide-linked. A helical transmembrane segment spans residues 99–119 (QLYFFHFLGSTECFLYTVMSY). At 120-138 (DRYLAISYPLRYTSMMSGS) the chain is on the cytoplasmic side. The helical transmembrane segment at 139-159 (RCALLATSTWLSGSLHSAVQT) threads the bilayer. At 160–196 (ILTFHLPYCGPNQIQHYLCDAPPILKLACADTSANEM) the chain is on the extracellular side. A helical transmembrane segment spans residues 197–216 (VIFVDIGLVASGCFLLIVLS). Topologically, residues 217 to 236 (YVSIVCSILRIHTSEGRHRA) are cytoplasmic. The chain crosses the membrane as a helical span at residues 237-257 (FQTCASHCIVVLCFFVPCVFI). Residues 258–268 (YLRPGSRDVVD) lie on the Extracellular side of the membrane. The chain crosses the membrane as a helical span at residues 269–289 (GVVAIFYTVLTPLLNPVVYTL). Topologically, residues 290-311 (RNKEVKKAVLKLRDKVAHSQGE) are cytoplasmic.

It belongs to the G-protein coupled receptor 1 family.

It localises to the cell membrane. Odorant receptor. This Homo sapiens (Human) protein is Olfactory receptor 10G9 (OR10G9).